The primary structure comprises 60 residues: Large ribosomal subunit protein bL32 (60 aa).

This sequence belongs to the bacterial ribosomal protein bL32 family.

The chain is Large ribosomal subunit protein bL32 from Clostridium novyi (strain NT).